The sequence spans 398 residues: MVAGIHSLLLLLFYQVLLSGCTGLIPEEGKRKYTESGRSSPQQSQRVLNQFELRLLSMFGLKRRPTPGKNVVIPPYMLDLYHLHLAQLAADEGTSAMDFQMERAASRANTVRSFHHEESMEEIPESREKTIQRFFFNLSSIPNEELVTSAELRIFREQVQEPFESDSSKLHRINIYDIVKPAAAASRGPVVRLLDTRLVHHNESKWESFDVTPAIARWIAHKQPNHGFVVEVNHLDNDKNVPKKHVRISRSLTPDKDNWPQIRPLLVTFSHDGKGHALHKRQKRQARHKQRKRLKSSCRRHPLYVDFSDVGWNDWIVAPPGYHAFYCHGECPFPLADHLNSTNHAIVQTLVNSVNTNIPKACCVPTELSAISMLYLDENEKVVLKNYQDMVVEGCGCR.

An N-terminal signal peptide occupies residues 1-23 (MVAGIHSLLLLLFYQVLLSGCTG). Positions 24 to 284 (LIPEEGKRKY…GHALHKRQKR (261 aa)) are excised as a propeptide. Residues asparagine 137, asparagine 202, and asparagine 340 are each glycosylated (N-linked (GlcNAc...) asparagine). 3 disulfides stabilise this stretch: cysteine 298-cysteine 363, cysteine 327-cysteine 395, and cysteine 331-cysteine 397.

Belongs to the TGF-beta family. As to quaternary structure, homodimer; disulfide-linked.

It is found in the secreted. Its function is as follows. Induces cartilage and bone formation. The polypeptide is Bone morphogenetic protein 2-A (bmp2-a) (Xenopus laevis (African clawed frog)).